A 571-amino-acid chain; its full sequence is Septation ring formation regulator EzrA (571 aa).

Topologically, residues 1–3 (MYY) are extracellular. The chain crosses the membrane as a helical span at residues 4–22 (MLIGFIIVVIAVISAGYIL). At 23–571 (KRKHYQRINE…ESKVSVDDIE (549 aa)) the chain is on the cytoplasmic side. Coiled-coil stretches lie at residues 170-215 (EAKL…QMER), 248-299 (LAQM…TLEH), 326-374 (DALA…ASGE), 400-437 (NFAE…ERER), and 478-529 (RIAE…ENHF).

The protein belongs to the EzrA family.

The protein resides in the cell membrane. Negative regulator of FtsZ ring formation; modulates the frequency and position of FtsZ ring formation. Inhibits FtsZ ring formation at polar sites. Interacts either with FtsZ or with one of its binding partners to promote depolymerization. The polypeptide is Septation ring formation regulator EzrA (Listeria innocua serovar 6a (strain ATCC BAA-680 / CLIP 11262)).